The following is a 357-amino-acid chain: Peptide chain release factor 1 (357 aa).

Residue Gln-234 is modified to N5-methylglutamine.

The protein belongs to the prokaryotic/mitochondrial release factor family. Post-translationally, methylated by PrmC. Methylation increases the termination efficiency of RF1.

It is found in the cytoplasm. In terms of biological role, peptide chain release factor 1 directs the termination of translation in response to the peptide chain termination codons UAG and UAA. This Alkaliphilus oremlandii (strain OhILAs) (Clostridium oremlandii (strain OhILAs)) protein is Peptide chain release factor 1.